The primary structure comprises 118 residues: Ly-6/neurotoxin-like protein 1 (118 aa).

Residues 1-22 (MTPLLTLFLVVLMGLPLAPVQA) form the signal peptide. Positions 23 to 107 (LDCHVCAYNG…LAIPATLALA (85 aa)) constitute a UPAR/Ly6 domain. 5 disulfide bridges follow: cysteine 25-cysteine 48, cysteine 28-cysteine 35, cysteine 41-cysteine 66, cysteine 70-cysteine 87, and cysteine 88-cysteine 93. Serine 95 carries GPI-anchor amidated serine lipidation. Positions 96-118 (AGLAIPATLALAPVLLATLWGLL) are cleaved as a propeptide — removed in mature form.

Interacts with nAChRs containing alpha-4:beta-2 (CHRNA4:CHRNB2) and alpha-7 (CHRNA7) subunits. Interacts with CHRNA4 probably in the endoplasmic reticulum prior to nAChR pentameric assembly. Interacts with KCNA2/Potassium voltage-gated channel subfamily A member 2. In terms of tissue distribution, expressed in lung predominantly in airway epithelial cells, submucous glands, and smooth muscle cells, in endothelial and smooth muscle cells in vessel walls and in alveolar type II cells (at protein level). Also expressed in brain.

It localises to the cell membrane. The protein resides in the cell projection. It is found in the dendrite. The protein localises to the endoplasmic reticulum. Acts in different tissues through interaction to nicotinic acetylcholine receptors (nAChRs). The proposed role as modulator of nAChR activity seems to be dependent on the nAChR subtype and stoichiometry, and to involve an effect on nAChR trafficking and its cell surface expression, and on single channel properties of the nAChR inserted in the plasma membrane. Modulates functional properties of nicotinic acetylcholine receptors (nAChRs) to prevent excessive excitation, and hence neurodegeneration. Enhances desensitization by increasing both the rate and extent of desensitization of alpha-4:beta-2-containing nAChRs and slowing recovery from desensitization. Promotes large amplitude ACh-evoked currents through alpha-4:beta-2 nAChRs. Is involved in regulation of the nAChR pentameric assembly in the endoplasmic reticulum. Shifts stoichiometry from high sensitivity alpha-4(2):beta-2(3) to low sensitivity alpha-4(3):beta-2(2) nAChR. In vitro modulates alpha-3:beta-4-containing nAChRs. Reduces cell surface expression of (alpha-3:beta-4)(2):beta-4 and (alpha-3:beta-4)(2):alpha-5 nAChRs suggesting an interaction with nAChR alpha-3(-):(+)beta-4 subunit interfaces and an allosteric mode. Corresponding single channel effects characterized by decreased unitary conductance, altered burst proportions and enhanced desensitization/inactivation seem to depend on nAChR alpha:alpha subunit interfaces and are greater in (alpha-3:beta-2)(2):alpha-3 when compared to (alpha-3:beta-2)(2):alpha-5 nAChRs. Prevents plasticity in the primary visual cortex late in life. In Macaca mulatta (Rhesus macaque), this protein is Ly-6/neurotoxin-like protein 1.